The primary structure comprises 139 residues: Maximins 4/H3 type 5 (139 aa).

The first 18 residues, 1-18 (MNFKYIFAVSFLIASAYA), serve as a signal peptide directing secretion. A propeptide spanning residues 19 to 43 (RSVQNDEQSLSQRDVLEEESLREIR) is cleaved from the precursor. Residue N70 is modified to Asparagine amide. A propeptide spanning residues 74-118 (TAEEHEVMKRLEAVMRDLDSLDHPEEASERETRGFNQDEIAKEKR) is cleaved from the precursor. Position 138 is an isoleucine amide (I138).

This sequence belongs to the bombinin family. In terms of tissue distribution, expressed by the skin glands.

It localises to the secreted. Functionally, maximin-4 shows antibacterial activity against both Gram-positive and Gram-negative bacteria. It also shows antimicrobial activity against the fungus C.albicans, but not against A.flavus nor P.uticale. It has little hemolytic activity. It does not possess a significant cytotoxicity against tumor cell lines. It does not possess a significant anti-HIV activity. Maximin-H3 shows antibacterial activity against both Gram-positive and Gram-negative bacteria. It also shows antimicrobial activity against the fungus C.albicans. Shows strong hemolytic activity. The chain is Maximins 4/H3 type 5 from Bombina maxima (Giant fire-bellied toad).